The following is a 914-amino-acid chain: Chlorate reductase subunit alpha (914 aa).

The tat-type signal signal peptide spans 1-32 (MNSPDEHNGRRRFLQFSAAALASAAASPSLWA). Residues 62-125 (DSVGVMTHSN…VYCSWSKQPD (64 aa)) form the 4Fe-4S Mo/W bis-MGD-type domain. Residues H69, C73, C77, and C111 each contribute to the [4Fe-4S] cluster site. D205 is a Mo-bis(molybdopterin guanine dinucleotide) binding site.

The protein belongs to the prokaryotic molybdopterin-containing oxidoreductase family. In terms of assembly, heterotrimer of alpha, beta and gamma subunits. It depends on [4Fe-4S] cluster as a cofactor. Mo-bis(molybdopterin guanine dinucleotide) serves as cofactor. Predicted to be exported by the Tat system. The position of the signal peptide cleavage has not been experimentally proven.

It is found in the periplasm. The catalysed reaction is chlorate + AH2 = chlorite + A + H2O. Its function is as follows. Terminal reductase that allows anaerobic growth on chlorate as the sole respiratory oxidant. This Ideonella dechloratans protein is Chlorate reductase subunit alpha (clrA).